A 97-amino-acid chain; its full sequence is Large ribosomal subunit protein uL23 (97 aa).

It belongs to the universal ribosomal protein uL23 family. As to quaternary structure, part of the 50S ribosomal subunit. Contacts protein L29, and trigger factor when it is bound to the ribosome.

In terms of biological role, one of the early assembly proteins it binds 23S rRNA. One of the proteins that surrounds the polypeptide exit tunnel on the outside of the ribosome. Forms the main docking site for trigger factor binding to the ribosome. In Brucella abortus (strain S19), this protein is Large ribosomal subunit protein uL23.